The primary structure comprises 193 residues: NAD(P)H-quinone oxidoreductase subunit I (193 aa).

4Fe-4S ferredoxin-type domains are found at residues 55 to 84 (GRIHFEFDKCIACEVCVRVCPINLPVVDWE) and 95 to 124 (KHYSIDFGVCIFCGNCVEYCPTNCLSMTEE). Residues Cys64, Cys67, Cys70, Cys74, Cys104, Cys107, Cys110, and Cys114 each coordinate [4Fe-4S] cluster. The tract at residues 169–193 (LDPHDLPSGNQRSGKRPEEIIAESD) is disordered.

Belongs to the complex I 23 kDa subunit family. In terms of assembly, NDH-1 is composed of at least 11 different subunits. [4Fe-4S] cluster is required as a cofactor.

Its subcellular location is the cellular thylakoid membrane. It catalyses the reaction a plastoquinone + NADH + (n+1) H(+)(in) = a plastoquinol + NAD(+) + n H(+)(out). It carries out the reaction a plastoquinone + NADPH + (n+1) H(+)(in) = a plastoquinol + NADP(+) + n H(+)(out). Its function is as follows. NDH-1 shuttles electrons from an unknown electron donor, via FMN and iron-sulfur (Fe-S) centers, to quinones in the respiratory and/or the photosynthetic chain. The immediate electron acceptor for the enzyme in this species is believed to be plastoquinone. Couples the redox reaction to proton translocation, and thus conserves the redox energy in a proton gradient. In Rippkaea orientalis (strain PCC 8801 / RF-1) (Cyanothece sp. (strain PCC 8801)), this protein is NAD(P)H-quinone oxidoreductase subunit I.